A 314-amino-acid chain; its full sequence is Homeobox protein SIX3 (314 aa).

Residues 188 to 247 (GEQKTHCFKERTRSLLREWYLQDPYPNPSKKRELAQATGLTPTQVGNWFKNRRQRDRAAA) constitute a DNA-binding region (homeobox). Disordered stretches follow at residues 214-233 (NPSK…TQVG) and 240-314 (RQRD…ECDV). Positions 271-293 (PTHSSAESPSTAASPTTSVSSLT) are enriched in low complexity. Residues 298-314 (TGTSILSVTSSDSECDV) are compositionally biased toward polar residues.

This sequence belongs to the SIX/Sine oculis homeobox family.

The protein resides in the nucleus. Functionally, transcriptional regulator which can act as both a transcriptional repressor and activator by binding a ATTA homeodomain core recognition sequence on these target genes. During forebrain development represses WNT1 expression allowing zona limitans intrathalamica formation and thereby ensuring proper anterio-posterior patterning of the diencephalon and formation of the rostral diencephalon. Acts as a direct upstream activator of SHH expression in the rostral diencephalon ventral midline and that in turn SHH maintains its expression. In addition, Six3 activity is required for the formation of the telencephalon. During postnatal stages of brain development is necessary for ependymal cell maturation by promoting the maturation of radial glia into ependymal cells through regulation of neuroblast proliferation and migration. Acts on the proliferation and differentiation of neural progenitor cells through activating transcription of CCND1 and CCND2. During early lens formation plays a role in lens induction and specification by activating directly PAX6 in the presumptive lens ectoderm. In turn PAX6 activates SIX3 resulting in activation of PDGFRA and CCND1 promoting cell proliferation. Also is required for the neuroretina development by directly suppressing WNT8B expression in the anterior neural plate territory. Its action during retina development and lens morphogenesis is AES and TLE4-dependent manner. Furthermore, during eye development regulates several genes expression. Before and during early lens development represses the CRYGF promoter by binding a SIX repressor element. Directly activates RHO transcription, or cooperates with CRX or NRL. Six3 also functions in the formation of the proximodistal axis of the optic cup, and promotes the formation of optic vesicles-like structures. During pituitary development, acts in parallel or alternatively with HESX1 to control cell proliferation through Wnt/beta-catenin pathway. Plays a role in eye development by suppressing WNT1 expression and in dorsal-ventral patterning by repressing BMP signaling pathway. This is Homeobox protein SIX3 (SIX3) from Gallus gallus (Chicken).